The sequence spans 194 residues: E3 ubiquitin-protein ligase RNF185 (194 aa).

The disordered stretch occupies residues 1–32 (MASKGPTTSASTKSSSTGGTSGSSSSNGAGDN). Residues 31 to 82 (DNTNQDNTFECNICLDTAKDAVISLCGHLFCWPCLHQWLETRPNRQVCPVCK) are required for ubiquitin ligase activity and protection against ER stress-induced cell death. The segment at 41 to 82 (CNICLDTAKDAVISLCGHLFCWPCLHQWLETRPNRQVCPVCK) adopts an RING-type zinc-finger fold. Residues 92–125 (PLYGRGSTGQQDPREKTPPRPQGQRPEPENRGGF) form a disordered region. Helical transmembrane passes span 133 to 153 (GGFQMSFGIGAFPFGIFATAF) and 174 to 194 (QFLSRLFLFVALVIMFWLLIA).

It is found in the mitochondrion outer membrane. Its subcellular location is the endoplasmic reticulum membrane. It catalyses the reaction S-ubiquitinyl-[E2 ubiquitin-conjugating enzyme]-L-cysteine + [acceptor protein]-L-lysine = [E2 ubiquitin-conjugating enzyme]-L-cysteine + N(6)-ubiquitinyl-[acceptor protein]-L-lysine.. The protein operates within protein modification; protein ubiquitination. E3 ubiquitin-protein ligase that regulates selective mitochondrial autophagy by mediating 'Lys-63'-linked polyubiquitination. Acts in the endoplasmic reticulum (ER)-associated degradation (ERAD) pathway, which targets misfolded proteins that accumulate in the endoplasmic reticulum (ER) for ubiquitination and subsequent proteasome-mediated degradation. Protects cells from ER stress-induced apoptosis. Responsible for the cotranslational ubiquitination and degradation of CFTR in the ERAD pathway. Also acts as a regulator of the innate antiviral response by catalyzing 'Lys-27'-linked polyubiquitination of CGAS, thereby promoting CGAS cyclic GMP-AMP synthase activity. Preferentially associates with the E2 enzymes UBE2J1 and UBE2J2. The protein is E3 ubiquitin-protein ligase RNF185 (RNF185) of Gallus gallus (Chicken).